The chain runs to 185 residues: Ribosome maturation factor RimM (185 aa).

A PRC barrel domain is found at 96 to 171 (EDEFYHSDLL…VITIDPPEDV (76 aa)). Residues 165-185 (IDPPEDVGSKAEEEGGGAPDD) are disordered.

Belongs to the RimM family. In terms of assembly, binds ribosomal protein uS19.

The protein resides in the cytoplasm. Functionally, an accessory protein needed during the final step in the assembly of 30S ribosomal subunit, possibly for assembly of the head region. Essential for efficient processing of 16S rRNA. May be needed both before and after RbfA during the maturation of 16S rRNA. It has affinity for free ribosomal 30S subunits but not for 70S ribosomes. This chain is Ribosome maturation factor RimM, found in Maricaulis maris (strain MCS10) (Caulobacter maris).